An 85-amino-acid polypeptide reads, in one-letter code: Large ribosomal subunit protein bL31B (85 aa).

Belongs to the bacterial ribosomal protein bL31 family. Type B subfamily. As to quaternary structure, part of the 50S ribosomal subunit.

The polypeptide is Large ribosomal subunit protein bL31B (Clavibacter sepedonicus (Clavibacter michiganensis subsp. sepedonicus)).